We begin with the raw amino-acid sequence, 666 residues long: TATA box-binding protein-associated factor RNA polymerase I subunit B (666 aa).

The RRN7-type zinc finger occupies 1-29 (MICTECENDAFDEEDDGYYYCQRCGVQVE). Cys3, Cys6, Cys21, and Cys24 together coordinate Zn(2+). Residues 30–64 (NLIQTGVDDGDLIGEGGGTQGALYNPKHRRTEPQP) are B-reader. Disordered regions lie at residues 45–110 (GGGT…VDKE) and 189–208 (DSEHQSEDGEVKDAKRLKRH). The interval 65 to 80 (ITPSQPRFTDDTSRYS) is B-linker. Residues 78–89 (RYSQFKSQFESE) are compositionally biased toward polar residues. Residues 81-285 (QFKSQFESEN…REQMGERSAA (205 aa)) are N-terminal cyclin fold. Composition is skewed to basic and acidic residues over residues 90 to 110 (NGNKELPREVKRAPDSYVDKE) and 189 to 202 (DSEHQSEDGEVKDA). The interval 286 to 288 (CPV) is C-terminal cyclin fold. Positions 515–548 (SDGNNPCSSSSRRNESVSIGLDLSSSEHRESSSP) are disordered. Positions 539-548 (SSEHRESSSP) are enriched in basic and acidic residues.

This sequence belongs to the RRN7/TAF1B family. As to quaternary structure, interacts with TFIIF. Interacts with MEE14/CBP1, TBP1 and NRPB1 (via CTD). In terms of tissue distribution, expressed at high levels in seedlings, inflorescences and young siliques and at lower levels in roots. Not detected in leaves and stems. Detected in root tips and shoot apical meristems, in anthers, primarily in microspores with weaker expression in mature pollen grains and in the central cell of the mature female gametophyte. Not expressed in synergids, egg cells, antipodal cells, endosperm cells and fertilized egg cells.

It localises to the nucleus. Its subcellular location is the nucleolus. Component of RNA polymerase I core factor complex that acts as a GTF2B/TFIIB-like factor and plays a key role in multiple steps during transcription initiation such as pre-initiation complex (PIC) assembly and postpolymerase recruitment events in polymerase I (Pol I) transcription. Binds rDNA promoters and plays a role in Pol I recruitment. Required for the development of the one-cell zygote and endosperm in embryos. Required for micropylar pollen tube guidance, but has no effect on ovule development and gametophytic cell fate specification. May regulate the transcription of secreted cysteine-rich peptide (CRP) genes in the embryo sac. This chain is TATA box-binding protein-associated factor RNA polymerase I subunit B, found in Arabidopsis thaliana (Mouse-ear cress).